Consider the following 362-residue polypeptide: UDP-galactose transporter homolog 1 (362 aa).

A run of 5 helical transmembrane segments spans residues 7–27, 45–65, 111–131, 141–161, and 175–195; these read IFPV…WALV, CPNV…YFYM, LTYM…HLII, SVVA…GSKG, and FFQK…DGLT. Residue Asn196 is glycosylated (N-linked (GlcNAc...) asparagine). Helical transmembrane passes span 234 to 254, 271 to 291, 296 to 316, and 317 to 337; these read HMMF…LLVI, IIVS…CFIF, LYGS…SMLL, and SIIV…VIVF.

It belongs to the nucleotide-sugar transporter family. SLC35B subfamily.

The protein resides in the endoplasmic reticulum membrane. In terms of biological role, may be involved in specific transport of UDP-Gal from the cytosol to the Golgi lumen. Involved in the maintenance of optimal conditions for the folding of secretory pathway proteins in the endoplasmic reticulum. This is UDP-galactose transporter homolog 1 (HUT1) from Candida glabrata (strain ATCC 2001 / BCRC 20586 / JCM 3761 / NBRC 0622 / NRRL Y-65 / CBS 138) (Yeast).